A 197-amino-acid chain; its full sequence is Prefoldin subunit 3 (197 aa).

Alanine 2 bears the N-acetylalanine mark. Residue lysine 59 is modified to N6-acetyllysine.

This sequence belongs to the prefoldin subunit alpha family. Heterohexamer of two PFD-alpha type and four PFD-beta type subunits. Binds to the C-terminal part of VHL. As to expression, ubiquitous.

The protein resides in the cytoplasm. It is found in the nucleus. Functionally, binds specifically to cytosolic chaperonin (c-CPN) and transfers target proteins to it. Binds to nascent polypeptide chain and promotes folding in an environment in which there are many competing pathways for nonnative proteins. This Homo sapiens (Human) protein is Prefoldin subunit 3 (VBP1).